We begin with the raw amino-acid sequence, 282 residues long: tRNA uridine(34) hydroxylase (282 aa).

In terms of domain architecture, Rhodanese spans 128 to 222 (EGRPVVMLDT…YFEEVGGDHY (95 aa)). Cys182 acts as the Cysteine persulfide intermediate in catalysis.

It belongs to the TrhO family.

It carries out the reaction uridine(34) in tRNA + AH2 + O2 = 5-hydroxyuridine(34) in tRNA + A + H2O. Functionally, catalyzes oxygen-dependent 5-hydroxyuridine (ho5U) modification at position 34 in tRNAs. The sequence is that of tRNA uridine(34) hydroxylase from Cupriavidus pinatubonensis (strain JMP 134 / LMG 1197) (Cupriavidus necator (strain JMP 134)).